The primary structure comprises 168 residues: Phosphopantetheine adenylyltransferase (168 aa).

Residue threonine 11 coordinates substrate. ATP is bound by residues 11-12 (TF) and histidine 19. 3 residues coordinate substrate: lysine 43, threonine 75, and arginine 89. Residues 90–92 (GIR), glutamate 100, and 125–131 (WSYMSSS) contribute to the ATP site.

Belongs to the bacterial CoaD family. In terms of assembly, homohexamer. Mg(2+) is required as a cofactor.

It localises to the cytoplasm. It catalyses the reaction (R)-4'-phosphopantetheine + ATP + H(+) = 3'-dephospho-CoA + diphosphate. Its pathway is cofactor biosynthesis; coenzyme A biosynthesis; CoA from (R)-pantothenate: step 4/5. Its function is as follows. Reversibly transfers an adenylyl group from ATP to 4'-phosphopantetheine, yielding dephospho-CoA (dPCoA) and pyrophosphate. This is Phosphopantetheine adenylyltransferase from Wigglesworthia glossinidia brevipalpis.